Consider the following 135-residue polypeptide: Protein cornichon homolog 1 (135 aa).

3 consecutive transmembrane segments (helical) span residues 2–22, 51–71, and 111–131; these read VFVW…VIYQ, FVLQ…AMFL, and IVGL…TVLL.

This sequence belongs to the cornichon family. In terms of assembly, interacts with HKT1;3.

It is found in the endoplasmic reticulum membrane. Its subcellular location is the golgi apparatus membrane. Functionally, acts as a cargo receptor necessary for the transportation of the cation transporter HKT1;3 and possibly other secretory proteins from the endoplasmic reticulum (ER) in COPII-coated vesicles targeted to the Golgi apparatus. This chain is Protein cornichon homolog 1, found in Oryza sativa subsp. japonica (Rice).